The chain runs to 368 residues: Large ribosomal subunit protein bL27m (368 aa).

The transit peptide at 1–20 directs the protein to the mitochondrion; the sequence is MFSGLHTSKYACQVVVQIRT. Positions 23-44 are disordered; the sequence is KRAAGSRTSMKDSAGRRLGPKK. Over residues 31 to 44 the composition is skewed to basic and acidic residues; the sequence is SMKDSAGRRLGPKK.

The protein belongs to the bacterial ribosomal protein bL27 family.

Its subcellular location is the mitochondrion. Functionally, component of the large subunit of mitochondrial ribosome. This Candida glabrata (strain ATCC 2001 / BCRC 20586 / JCM 3761 / NBRC 0622 / NRRL Y-65 / CBS 138) (Yeast) protein is Large ribosomal subunit protein bL27m (MRPL2).